We begin with the raw amino-acid sequence, 496 residues long: ADP-dependent glucokinase (496 aa).

Residues 1-22 (MALWRGSACAGFLALAVGCVFL) form the signal peptide. Residues 52–496 (SPESRLAAAW…GLFYSEARPD (445 aa)) enclose the ADPK domain. The Mg(2+) site is built by glutamate 297, glutamate 328, and aspartate 481. Aspartate 481 functions as the Proton acceptor in the catalytic mechanism.

Belongs to the ADP-dependent glucokinase family. As to quaternary structure, monomer. It depends on Mg(2+) as a cofactor.

It localises to the secreted. The catalysed reaction is D-glucose + ADP = D-glucose 6-phosphate + AMP + H(+). It functions in the pathway carbohydrate degradation; glycolysis. In terms of biological role, catalyzes the phosphorylation of D-glucose to D-glucose 6-phosphate using ADP as the phosphate donor. GDP and CDP can replace ADP, but with reduced efficiency. This is ADP-dependent glucokinase (Adpgk) from Mus musculus (Mouse).